Consider the following 422-residue polypeptide: Serine protease HTRA2, mitochondrial (422 aa).

The transit peptide at 1–17 (MALRGSHRLEVIFKRCI) directs the protein to the mitochondrion. Residues 18 to 74 (ASPVLHSQAGNRRSSQLAIKGVDPNSNGNSGQYQQNGEHKEKGWRRLVRFFVPFSLG) constitute a propeptide that is removed on maturation. Residues 28 to 55 (NRRSSQLAIKGVDPNSNGNSGQYQQNGE) are disordered. Over residues 42 to 53 (NSNGNSGQYQQN) the composition is skewed to low complexity. A helical transmembrane segment spans residues 64 to 82 (LVRFFVPFSLGAAVSAAII). 2 short sequence motifs (IAP-binding) span residues 75 to 78 (AAVS) and 94 to 97 (SKMT). The serine protease stretch occupies residues 139–302 (SNGSGFIIEQ…IPIDYVKVFL (164 aa)). Catalysis depends on charge relay system residues histidine 157, aspartate 189, and serine 266. The region spanning 325–410 (MGITMLTLTP…TLDIVILRGV (86 aa)) is the PDZ domain.

This sequence belongs to the peptidase S1C family. As to quaternary structure, interacts with th/DIAP1 (via BIR 2 domain).

The protein resides in the mitochondrion intermembrane space. It is found in the mitochondrion membrane. It catalyses the reaction Cleavage of non-polar aliphatic amino-acids at the P1 position, with a preference for Val, Ile and Met. At the P2 and P3 positions, Arg is selected most strongly with a secondary preference for other hydrophilic residues.. In terms of biological role, serine protease that shows proteolytic activity against a non-specific substrate beta-casein. Promotes or induces cell death either by direct binding to and inhibition of BIRC proteins (also called inhibitor of apoptosis proteins, IAPs), leading to an increase in caspase activity, or by a BIRC inhibition-independent, caspase-independent and serine protease activity-dependent mechanism. Can antagonize antiapoptotic activity of th/Diap1 by directly inducing the degradation of th/Diap1. This is Serine protease HTRA2, mitochondrial from Drosophila sechellia (Fruit fly).